Here is a 439-residue protein sequence, read N- to C-terminus: Phosphoribosylamine--glycine ligase (439 aa).

An ATP-grasp domain is found at 109-317 (REFMERNKIP…LVEISERIID (209 aa)). ATP is bound at residue 136-195 (IDEFGKPVVVKPLGLTGGKGVKVVGYQLKDNEEAKEYAEYLIRKDGKVLIEERTDGVEFT). Mg(2+) is bound by residues glutamine 275, glutamate 287, and asparagine 289. Glutamine 275, glutamate 287, and asparagine 289 together coordinate Mn(2+).

It belongs to the GARS family. The cofactor is Mg(2+). Mn(2+) is required as a cofactor.

The enzyme catalyses 5-phospho-beta-D-ribosylamine + glycine + ATP = N(1)-(5-phospho-beta-D-ribosyl)glycinamide + ADP + phosphate + H(+). It functions in the pathway purine metabolism; IMP biosynthesis via de novo pathway; N(1)-(5-phospho-D-ribosyl)glycinamide from 5-phospho-alpha-D-ribose 1-diphosphate: step 2/2. The chain is Phosphoribosylamine--glycine ligase from Pyrococcus furiosus (strain ATCC 43587 / DSM 3638 / JCM 8422 / Vc1).